Reading from the N-terminus, the 167-residue chain is Translation initiation factor IF-3 (167 aa).

It belongs to the IF-3 family. Monomer.

The protein localises to the cytoplasm. Functionally, IF-3 binds to the 30S ribosomal subunit and shifts the equilibrium between 70S ribosomes and their 50S and 30S subunits in favor of the free subunits, thus enhancing the availability of 30S subunits on which protein synthesis initiation begins. The sequence is that of Translation initiation factor IF-3 from Bacillus cereus (strain ATCC 14579 / DSM 31 / CCUG 7414 / JCM 2152 / NBRC 15305 / NCIMB 9373 / NCTC 2599 / NRRL B-3711).